The sequence spans 504 residues: Tachykinin-like peptides receptor 86C (504 aa).

Over 1–84 (MSEIVDTELL…PYELPWEQKT (84 aa)) the chain is Extracellular. 3 N-linked (GlcNAc...) asparagine glycosylation sites follow: Asn12, Asn28, and Asn36. The chain crosses the membrane as a helical span at residues 85 to 108 (IWAIIFGLMMFVAIAGNGIVLWIV). Residues 109 to 118 (TGHRSMRTVT) lie on the Cytoplasmic side of the membrane. A helical membrane pass occupies residues 119–143 (NYFLLNLSIADLLMSSLNCVFNFIF). Topologically, residues 144 to 155 (MLNSDWPFGSIY) are extracellular. The chain crosses the membrane as a helical span at residues 156–179 (CTINNFVANVTVSTSVFTLVAISF). The Cytoplasmic segment spans residues 180 to 199 (DRYIAIVHPLKRRTSRRKVR). A helical membrane pass occupies residues 200 to 224 (IILVLIWALSCVLSAPCLLYSSIMT). Over 225–250 (KHYYNGKSRTVCFMMWPDGRYPTSMA) the chain is Extracellular. A helical transmembrane segment spans residues 251–275 (DYAYNLIILVLTYGIPMIVMLICYS). The Cytoplasmic portion of the chain corresponds to 276 to 308 (LMGRVLWGSRSIGENTDRQMESMKSKRKVVRMF). A helical membrane pass occupies residues 309 to 330 (IAIVSIFAICWLPYHLFFIYAY). Residues 331 to 343 (HNNQVASTKYVQH) are Extracellular-facing. The helical transmembrane segment at 344–367 (MYLGFYWLAMSNAMVNPLIYYWMN) threads the bilayer. The Cytoplasmic portion of the chain corresponds to 368–504 (KRFRMYFQRI…NPVELSPKQM (137 aa)). Residues 393-450 (PKSRLTNKNSSNRHTRAETKSQWKRSTMETQIQQAPVTSSCREQRSAQQQQPPGSGTN) form a disordered region. Polar residues-rich tracts occupy residues 395 to 404 (SRLTNKNSSN) and 416 to 450 (KRST…SGTN).

Belongs to the G-protein coupled receptor 1 family. Expressed in central nervous system, as well as in subsets of neurons in each segment of the developing ventral ganglia.

It is found in the cell membrane. Functionally, receptor for tachykinin-like peptides. This is Tachykinin-like peptides receptor 86C (TkR86C) from Drosophila melanogaster (Fruit fly).